We begin with the raw amino-acid sequence, 264 residues long: Tryptophan synthase alpha chain (264 aa).

Residues glutamate 44 and aspartate 55 each act as proton acceptor in the active site.

The protein belongs to the TrpA family. In terms of assembly, tetramer of two alpha and two beta chains.

The enzyme catalyses (1S,2R)-1-C-(indol-3-yl)glycerol 3-phosphate + L-serine = D-glyceraldehyde 3-phosphate + L-tryptophan + H2O. It participates in amino-acid biosynthesis; L-tryptophan biosynthesis; L-tryptophan from chorismate: step 5/5. The alpha subunit is responsible for the aldol cleavage of indoleglycerol phosphate to indole and glyceraldehyde 3-phosphate. The chain is Tryptophan synthase alpha chain from Lactiplantibacillus plantarum (strain ATCC BAA-793 / NCIMB 8826 / WCFS1) (Lactobacillus plantarum).